The chain runs to 461 residues: Cysteine--tRNA ligase (461 aa).

Cys-28 is a Zn(2+) binding site. The 'HIGH' region signature appears at 30 to 40; it reads ITVYDLCHIGH. Zn(2+)-binding residues include Cys-209, His-234, and Glu-238. A 'KMSKS' region motif is present at residues 266-270; that stretch reads KMSKS. An ATP-binding site is contributed by Lys-269.

This sequence belongs to the class-I aminoacyl-tRNA synthetase family. As to quaternary structure, monomer. Zn(2+) is required as a cofactor.

It is found in the cytoplasm. The enzyme catalyses tRNA(Cys) + L-cysteine + ATP = L-cysteinyl-tRNA(Cys) + AMP + diphosphate. In Salmonella agona (strain SL483), this protein is Cysteine--tRNA ligase.